The primary structure comprises 357 residues: Phosphoribosylformylglycinamidine cyclo-ligase (357 aa).

It belongs to the AIR synthase family.

It is found in the cytoplasm. The catalysed reaction is 2-formamido-N(1)-(5-O-phospho-beta-D-ribosyl)acetamidine + ATP = 5-amino-1-(5-phospho-beta-D-ribosyl)imidazole + ADP + phosphate + H(+). The protein operates within purine metabolism; IMP biosynthesis via de novo pathway; 5-amino-1-(5-phospho-D-ribosyl)imidazole from N(2)-formyl-N(1)-(5-phospho-D-ribosyl)glycinamide: step 2/2. The chain is Phosphoribosylformylglycinamidine cyclo-ligase from Rhizobium leguminosarum bv. trifolii (strain WSM2304).